The following is a 197-amino-acid chain: Probable GTP-binding protein EngB (197 aa).

Residues 26–197 (DLPEIALAGR…TSWDAILESL (172 aa)) enclose the EngB-type G domain. GTP contacts are provided by residues 34–41 (GRSNVGKS), 61–65 (GKTQS), 79–82 (DVPG), 146–149 (TKAD), and 178–180 (FSS). Mg(2+)-binding residues include S41 and T63.

The protein belongs to the TRAFAC class TrmE-Era-EngA-EngB-Septin-like GTPase superfamily. EngB GTPase family. The cofactor is Mg(2+).

Its function is as follows. Necessary for normal cell division and for the maintenance of normal septation. The polypeptide is Probable GTP-binding protein EngB (Streptococcus mutans serotype c (strain ATCC 700610 / UA159)).